The chain runs to 439 residues: Diaminopimelate decarboxylase (439 aa).

The residue at position 66 (Lys66) is an N6-(pyridoxal phosphate)lysine. Pyridoxal 5'-phosphate-binding positions include Gly248 and Glu290–Arg293. Residues Arg293, Arg330, and Tyr334 each contribute to the substrate site. The Proton donor role is filled by Cys361. Residues Glu362 and Tyr390 each coordinate substrate. Position 390 (Tyr390) interacts with pyridoxal 5'-phosphate.

This sequence belongs to the Orn/Lys/Arg decarboxylase class-II family. LysA subfamily. Homodimer. Pyridoxal 5'-phosphate serves as cofactor.

The enzyme catalyses meso-2,6-diaminopimelate + H(+) = L-lysine + CO2. It participates in amino-acid biosynthesis; L-lysine biosynthesis via DAP pathway; L-lysine from DL-2,6-diaminopimelate: step 1/1. In terms of biological role, specifically catalyzes the decarboxylation of meso-diaminopimelate (meso-DAP) to L-lysine. The chain is Diaminopimelate decarboxylase from Halalkalibacterium halodurans (strain ATCC BAA-125 / DSM 18197 / FERM 7344 / JCM 9153 / C-125) (Bacillus halodurans).